A 137-amino-acid chain; its full sequence is Nucleoside diphosphate kinase (137 aa).

ATP-binding residues include K9, F57, R85, T91, and R102. The Pros-phosphohistidine intermediate role is filled by H119.

This sequence belongs to the NDK family. In terms of assembly, homotetramer. The cofactor is Mg(2+).

Its subcellular location is the cytoplasm. It carries out the reaction a 2'-deoxyribonucleoside 5'-diphosphate + ATP = a 2'-deoxyribonucleoside 5'-triphosphate + ADP. The enzyme catalyses a ribonucleoside 5'-diphosphate + ATP = a ribonucleoside 5'-triphosphate + ADP. Major role in the synthesis of nucleoside triphosphates other than ATP. The ATP gamma phosphate is transferred to the NDP beta phosphate via a ping-pong mechanism, using a phosphorylated active-site intermediate. This chain is Nucleoside diphosphate kinase, found in Streptococcus thermophilus (strain CNRZ 1066).